The following is a 624-amino-acid chain: MRLLFIHADEMSFEARQKTKIAEEEPPIKEAEVEDCLVVFAAVQEADEENPKAIAEAAVEEIEDVAGELKADRIVLYPYAHLADDLASPDVAVEVLKRMEGLLKERGYEVVRAPFGWYKAFRLACKGHPLSELSRTVTPEAAEEAEEEKIESEFLVYMDGELIPVEEVDLSELPEDFRHLVMHELGEERETGDEEPAHVKLMREKEICDHEPAADVGHVRWYPKGHVVRRCLAEYVENLMADLGAAVVETPVMYDLSEDAIREHADKFGERQYRIRAGNRALMLRYAACFGAFRLLADTTLSRRHLPLKIYELSQSFRLEQSGEVVGLKRLRAFTMPDLHTVCADMDEAVEEFLEQAKLCLEVGLDLGLEYEVVFRTTEKFLKERKEVLEELAEAMEKAYGDAKPVLVEVLPERKHYWECKVDFAFIDSLGRPIENPTVQIDVESGRRFGITYADESGDERHPVILHCSPTGSLERVICAILEGQYKRFEQEGKLPTLPTWLSPVQARVIPVSEKVLEEAEKVFEELKSEGFRVDLDDRDEPVGRKIRDAGEEWVPYVIVIGEEEVKKGTLSVTIREESTLKEQRREEMTLEELVERLERETEGKPRVPLTIPDRLSRRPRFGR.

Residues 1 to 143 (MRLLFIHADE…SRTVTPEAAE (143 aa)) are editing domain. The interval 197–499 (AHVKLMREKE…EQEGKLPTLP (303 aa)) is catalytic. Zn(2+)-binding residues include Cys289, His340, and His467. A disordered region spans residues 598-624 (LERETEGKPRVPLTIPDRLSRRPRFGR).

Belongs to the class-II aminoacyl-tRNA synthetase family. Homodimer. Requires Zn(2+) as cofactor.

Its subcellular location is the cytoplasm. It catalyses the reaction tRNA(Thr) + L-threonine + ATP = L-threonyl-tRNA(Thr) + AMP + diphosphate + H(+). In terms of biological role, catalyzes the attachment of threonine to tRNA(Thr) in a two-step reaction: L-threonine is first activated by ATP to form Thr-AMP and then transferred to the acceptor end of tRNA(Thr). Also edits incorrectly charged L-seryl-tRNA(Thr). This is Threonine--tRNA ligase from Methanopyrus kandleri (strain AV19 / DSM 6324 / JCM 9639 / NBRC 100938).